Reading from the N-terminus, the 309-residue chain is ADP,ATP carrier protein 1 (309 aa).

Solcar repeat units follow at residues 11–104, 116–208, and 216–302; these read SHFG…IKSL, KWFA…FKPV, and GSFV…LQLI. 5 consecutive transmembrane segments (helical) span residues 13–40, 81–105, 114–134, 184–205, and 219–239; these read FGVD…VKLL, TANV…KSLL, YAKW…LSLL, FVPS…YDSF, and VASF…SYPL. ADP contacts are provided by Arg86 and Lys98. Arg243 is an ADP binding site. The segment at 243-248 is important for transport activity; that stretch reads RRRMMM. A Nucleotide carrier signature motif motif is present at residues 243–248; that stretch reads RRRMMM. The helical transmembrane segment at 279 to 299 threads the bilayer; it reads CGANIFRGVAAAGVISLYDQL.

The protein belongs to the mitochondrial carrier (TC 2.A.29) family. Monomer.

Its subcellular location is the mitochondrion inner membrane. The catalysed reaction is ADP(in) + ATP(out) = ADP(out) + ATP(in). Its activity is regulated as follows. The matrix-open state (m-state) is inhibited by the membrane-permeable bongkrekic acid (BKA). The cytoplasmic-open state (c-state) is inhibited by the membrane-impermeable toxic inhibitor carboxyatractyloside (CATR). Its function is as follows. ADP:ATP antiporter that mediates import of ADP into the mitochondrial matrix for ATP synthesis, and export of ATP out to fuel the cell. Cycles between the cytoplasmic-open state (c-state) and the matrix-open state (m-state): operates by the alternating access mechanism with a single substrate-binding site intermittently exposed to either the cytosolic (c-state) or matrix (m-state) side of the inner mitochondrial membrane. The protein is ADP,ATP carrier protein 1 (AAC1) of Saccharomyces cerevisiae (strain ATCC 204508 / S288c) (Baker's yeast).